Here is a 147-residue protein sequence, read N- to C-terminus: D-aminoacyl-tRNA deacylase (147 aa).

Residues 137 to 138 (GP) carry the Gly-cisPro motif, important for rejection of L-amino acids motif.

It belongs to the DTD family. As to quaternary structure, homodimer.

It is found in the cytoplasm. It carries out the reaction glycyl-tRNA(Ala) + H2O = tRNA(Ala) + glycine + H(+). It catalyses the reaction a D-aminoacyl-tRNA + H2O = a tRNA + a D-alpha-amino acid + H(+). Its function is as follows. An aminoacyl-tRNA editing enzyme that deacylates mischarged D-aminoacyl-tRNAs. Also deacylates mischarged glycyl-tRNA(Ala), protecting cells against glycine mischarging by AlaRS. Acts via tRNA-based rather than protein-based catalysis; rejects L-amino acids rather than detecting D-amino acids in the active site. By recycling D-aminoacyl-tRNA to D-amino acids and free tRNA molecules, this enzyme counteracts the toxicity associated with the formation of D-aminoacyl-tRNA entities in vivo and helps enforce protein L-homochirality. Upon expression in B.subtilis strain 168 confers resistance to D-Tyr and D-Asp, suggesting it acts on both of these amino acids. The protein is D-aminoacyl-tRNA deacylase of Bacillus amyloliquefaciens (Bacillus velezensis).